The primary structure comprises 403 residues: S-adenosylmethionine synthase (403 aa).

His-15 provides a ligand contact to ATP. Asp-17 serves as a coordination point for Mg(2+). K(+) is bound at residue Glu-43. Residues Glu-56 and Gln-99 each coordinate L-methionine. The interval 99-109 (QSPDINQGVDR) is flexible loop. ATP-binding positions include 166–168 (DAK), 232–233 (KF), Asp-241, 247–248 (RK), Ala-264, and Lys-268. Residue Asp-241 participates in L-methionine binding. Lys-272 serves as a coordination point for L-methionine.

It belongs to the AdoMet synthase family. In terms of assembly, homotetramer; dimer of dimers. It depends on Mg(2+) as a cofactor. Requires K(+) as cofactor.

It is found in the cytoplasm. It catalyses the reaction L-methionine + ATP + H2O = S-adenosyl-L-methionine + phosphate + diphosphate. Its pathway is amino-acid biosynthesis; S-adenosyl-L-methionine biosynthesis; S-adenosyl-L-methionine from L-methionine: step 1/1. Its function is as follows. Catalyzes the formation of S-adenosylmethionine (AdoMet) from methionine and ATP. The overall synthetic reaction is composed of two sequential steps, AdoMet formation and the subsequent tripolyphosphate hydrolysis which occurs prior to release of AdoMet from the enzyme. The polypeptide is S-adenosylmethionine synthase (Xanthomonas axonopodis pv. citri (strain 306)).